Here is a 211-residue protein sequence, read N- to C-terminus: MNSNVENLPPHIIRRVYKEVSTLTSDPPEGIKIIPNEEDITDVQVNIEGPEGTPYAGGMFRMKLILGKDFPAAPPKGYFLTKIFHPNVSNNGEICVNVLKKDWKAELGIRHVLLTIKCLLIHPNPESALNEEAGRLLLENYEEYASRARLMTDIHAQGTSLRGKDPTDPCSSASTPVVSGDGPMAKKHAGDRDKKLAAKKKTDKKRALRRL.

The UBC core domain maps to 11-157 (HIIRRVYKEV…ARLMTDIHAQ (147 aa)). The Glycyl thioester intermediate role is filled by Cys95. A disordered region spans residues 158-211 (GTSLRGKDPTDPCSSASTPVVSGDGPMAKKHAGDRDKKLAAKKKTDKKRALRRL). Residues 197 to 211 (AAKKKTDKKRALRRL) show a composition bias toward basic residues.

This sequence belongs to the ubiquitin-conjugating enzyme family.

The enzyme catalyses S-ubiquitinyl-[E1 ubiquitin-activating enzyme]-L-cysteine + [E2 ubiquitin-conjugating enzyme]-L-cysteine = [E1 ubiquitin-activating enzyme]-L-cysteine + S-ubiquitinyl-[E2 ubiquitin-conjugating enzyme]-L-cysteine.. It functions in the pathway protein modification; protein ubiquitination. In terms of biological role, catalyzes the covalent attachment of ubiquitin to other proteins. Acts as an essential factor of the anaphase promoting complex/cyclosome (APC/C), a cell cycle-regulated ubiquitin ligase that controls progression through mitosis. Acts by specifically elongating 'Lys-11'-linked polyubiquitin chains initiated by the E2 enzyme ube2c/ubch10 on APC/C substrates, enhancing the degradation of APC/C substrates by the proteasome and promoting mitotic exit. The sequence is that of Ubiquitin-conjugating enzyme E2 S-B (ube2s-b) from Xenopus laevis (African clawed frog).